A 185-amino-acid polypeptide reads, in one-letter code: Peptidyl-tRNA hydrolase (185 aa).

Y14 serves as a coordination point for tRNA. Residue H19 is the Proton acceptor of the active site. Residues F64, N66, and N112 each contribute to the tRNA site.

It belongs to the PTH family. Monomer.

Its subcellular location is the cytoplasm. The enzyme catalyses an N-acyl-L-alpha-aminoacyl-tRNA + H2O = an N-acyl-L-amino acid + a tRNA + H(+). Hydrolyzes ribosome-free peptidyl-tRNAs (with 1 or more amino acids incorporated), which drop off the ribosome during protein synthesis, or as a result of ribosome stalling. In terms of biological role, catalyzes the release of premature peptidyl moieties from peptidyl-tRNA molecules trapped in stalled 50S ribosomal subunits, and thus maintains levels of free tRNAs and 50S ribosomes. The chain is Peptidyl-tRNA hydrolase from Alkaliphilus metalliredigens (strain QYMF).